Reading from the N-terminus, the 94-residue chain is Protein EGG APPARATUS-1 (94 aa).

Topologically, residues Met1–Gly15 are cytoplasmic. A helical; Signal-anchor for type II membrane protein membrane pass occupies residues Ile16–Leu36. Residues Trp37–Ser94 are Extracellular-facing.

In terms of processing, possible proteolysis of the C-terminal region from the predicted transmembrane domain to permit secretion and transport of the mature protein to the cell walls of the nucellus, allowing the spreading from the egg cell apparatus to the micropylar opening of the ovule. Expressed only in the egg apparatus, consisting of the egg cell and two synergids. Not detected in the central cell, antipodals, and nucellar and integumental cells.

Its subcellular location is the membrane. Involved in short-range signaling required for pollen tube attraction by the female gametophyte. Required for female fertility. The chain is Protein EGG APPARATUS-1 (Ea1) from Zea mays (Maize).